Reading from the N-terminus, the 384-residue chain is 8-amino-7-oxononanoate synthase (384 aa).

Position 23 (Arg23) interacts with substrate. 110-111 contacts pyridoxal 5'-phosphate; it reads GF. His135 lines the substrate pocket. Positions 179, 206, and 232 each coordinate pyridoxal 5'-phosphate. The residue at position 235 (Lys235) is an N6-(pyridoxal phosphate)lysine. Thr348 is a binding site for substrate.

The protein belongs to the class-II pyridoxal-phosphate-dependent aminotransferase family. BioF subfamily. As to quaternary structure, homodimer. Pyridoxal 5'-phosphate is required as a cofactor.

The enzyme catalyses 6-carboxyhexanoyl-[ACP] + L-alanine + H(+) = (8S)-8-amino-7-oxononanoate + holo-[ACP] + CO2. The protein operates within cofactor biosynthesis; biotin biosynthesis. Catalyzes the decarboxylative condensation of pimeloyl-[acyl-carrier protein] and L-alanine to produce 8-amino-7-oxononanoate (AON), [acyl-carrier protein], and carbon dioxide. This is 8-amino-7-oxononanoate synthase from Vibrio cholerae serotype O1 (strain ATCC 39315 / El Tor Inaba N16961).